The chain runs to 205 residues: UPF0688 protein C1orf174 homolog (205 aa).

Positions Met-1–Asn-18 are enriched in basic residues. Disordered regions lie at residues Met-1–Val-128 and Ala-184–Ile-205. A compositionally biased stretch (basic and acidic residues) spans Asn-46–Met-63. The segment covering Ile-71 to Thr-108 has biased composition (polar residues). Over residues Glu-187 to Ala-196 the composition is skewed to acidic residues.

The protein belongs to the UPF0688 family.

It is found in the nucleus. This chain is UPF0688 protein C1orf174 homolog, found in Xenopus laevis (African clawed frog).